A 212-amino-acid chain; its full sequence is Thiamine-phosphate synthase (212 aa).

4-amino-2-methyl-5-(diphosphooxymethyl)pyrimidine contacts are provided by residues 35 to 39 (QLRDK) and Asn67. 2 residues coordinate Mg(2+): Asp68 and Asp87. 4-amino-2-methyl-5-(diphosphooxymethyl)pyrimidine is bound at residue Ser106. 132-134 (TGS) is a 2-[(2R,5Z)-2-carboxy-4-methylthiazol-5(2H)-ylidene]ethyl phosphate binding site. Lys135 contacts 4-amino-2-methyl-5-(diphosphooxymethyl)pyrimidine. Residues Gly163 and 183–184 (IS) each bind 2-[(2R,5Z)-2-carboxy-4-methylthiazol-5(2H)-ylidene]ethyl phosphate.

The protein belongs to the thiamine-phosphate synthase family. Mg(2+) is required as a cofactor.

It carries out the reaction 2-[(2R,5Z)-2-carboxy-4-methylthiazol-5(2H)-ylidene]ethyl phosphate + 4-amino-2-methyl-5-(diphosphooxymethyl)pyrimidine + 2 H(+) = thiamine phosphate + CO2 + diphosphate. The catalysed reaction is 2-(2-carboxy-4-methylthiazol-5-yl)ethyl phosphate + 4-amino-2-methyl-5-(diphosphooxymethyl)pyrimidine + 2 H(+) = thiamine phosphate + CO2 + diphosphate. The enzyme catalyses 4-methyl-5-(2-phosphooxyethyl)-thiazole + 4-amino-2-methyl-5-(diphosphooxymethyl)pyrimidine + H(+) = thiamine phosphate + diphosphate. The protein operates within cofactor biosynthesis; thiamine diphosphate biosynthesis; thiamine phosphate from 4-amino-2-methyl-5-diphosphomethylpyrimidine and 4-methyl-5-(2-phosphoethyl)-thiazole: step 1/1. In terms of biological role, condenses 4-methyl-5-(beta-hydroxyethyl)thiazole monophosphate (THZ-P) and 2-methyl-4-amino-5-hydroxymethyl pyrimidine pyrophosphate (HMP-PP) to form thiamine monophosphate (TMP). The protein is Thiamine-phosphate synthase of Methanocella arvoryzae (strain DSM 22066 / NBRC 105507 / MRE50).